The following is a 430-amino-acid chain: Phosphomethylpyrimidine synthase (430 aa).

Substrate contacts are provided by residues Asn67, Met96, Tyr125, His161, Ser183 to Gly185, Asp224 to Arg227, and Glu263. His267 contributes to the Zn(2+) binding site. Tyr290 serves as a coordination point for substrate. Residue His331 coordinates Zn(2+). [4Fe-4S] cluster-binding residues include Cys406, Cys409, and Cys413.

Belongs to the ThiC family. Homodimer. [4Fe-4S] cluster serves as cofactor.

It catalyses the reaction 5-amino-1-(5-phospho-beta-D-ribosyl)imidazole + S-adenosyl-L-methionine = 4-amino-2-methyl-5-(phosphooxymethyl)pyrimidine + CO + 5'-deoxyadenosine + formate + L-methionine + 3 H(+). Its pathway is cofactor biosynthesis; thiamine diphosphate biosynthesis. Functionally, catalyzes the synthesis of the hydroxymethylpyrimidine phosphate (HMP-P) moiety of thiamine from aminoimidazole ribotide (AIR) in a radical S-adenosyl-L-methionine (SAM)-dependent reaction. The sequence is that of Phosphomethylpyrimidine synthase from Campylobacter jejuni subsp. doylei (strain ATCC BAA-1458 / RM4099 / 269.97).